The chain runs to 550 residues: Formate--tetrahydrofolate ligase (550 aa).

T62–S69 contributes to the ATP binding site.

It belongs to the formate--tetrahydrofolate ligase family.

It catalyses the reaction (6S)-5,6,7,8-tetrahydrofolate + formate + ATP = (6R)-10-formyltetrahydrofolate + ADP + phosphate. It participates in one-carbon metabolism; tetrahydrofolate interconversion. The chain is Formate--tetrahydrofolate ligase from Corynebacterium diphtheriae (strain ATCC 700971 / NCTC 13129 / Biotype gravis).